The chain runs to 339 residues: Heat-inducible transcription repressor HrcA (339 aa).

This sequence belongs to the HrcA family.

Functionally, negative regulator of class I heat shock genes (grpE-dnaK-dnaJ and groELS operons). Prevents heat-shock induction of these operons. This is Heat-inducible transcription repressor HrcA from Frankia casuarinae (strain DSM 45818 / CECT 9043 / HFP020203 / CcI3).